The sequence spans 86 residues: Small ribosomal subunit protein bS18 (86 aa).

It belongs to the bacterial ribosomal protein bS18 family. In terms of assembly, part of the 30S ribosomal subunit. Forms a tight heterodimer with protein bS6.

Binds as a heterodimer with protein bS6 to the central domain of the 16S rRNA, where it helps stabilize the platform of the 30S subunit. This is Small ribosomal subunit protein bS18 from Campylobacter concisus (strain 13826).